The following is a 183-amino-acid chain: Capsid protein (183 aa).

Positions 136 to 183 (NAPILSTLPETTVVRRRGRSPRRRTPSPRRRRSQSPRRRRSQSPASQC) are disordered. Basic residues predominate over residues 149-176 (VRRRGRSPRRRTPSPRRRRSQSPRRRRS). A phosphoserine; by host mark is found at serine 155, serine 162, and serine 170. A 1; half-length repeat occupies 155 to 161 (SPRRRTP). The segment at 155–177 (SPRRRTPSPRRRRSQSPRRRRSQ) is 3 X 8 AA repeats of S-P-R-R-R-[PR]-S-Q. Residues 158-175 (RRTPSPRRRRSQSPRRRR) carry the Bipartite nuclear localization signal motif. A run of 2 repeats spans residues 162-169 (SPRRRRSQ) and 170-177 (SPRRRRSQ). The segment at 177-183 (QSPASQC) is RNA binding.

This sequence belongs to the orthohepadnavirus core antigen family. As to quaternary structure, homodimerizes, then multimerizes. Interacts with cytosol exposed regions of viral L glycoprotein present in the reticulum-to-Golgi compartment. Interacts with human FLNB. Phosphorylated form interacts with host importin alpha; this interaction depends on the exposure of the NLS, which itself depends upon genome maturation and/or phosphorylation of the capsid protein. Interacts with host NUP153. In terms of processing, phosphorylated by host SRPK1, SRPK2, and maybe protein kinase C or GAPDH. Phosphorylation is critical for pregenomic RNA packaging. Protein kinase C phosphorylation is stimulated by HBx protein and may play a role in transport of the viral genome to the nucleus at the late step during the viral replication cycle.

It localises to the virion. It is found in the host cytoplasm. In terms of biological role, self assembles to form an icosahedral capsid. Most capsids appear to be large particles with an icosahedral symmetry of T=4 and consist of 240 copies of capsid protein, though a fraction forms smaller T=3 particles consisting of 180 capsid proteins. Entering capsids are transported along microtubules to the nucleus. Phosphorylation of the capsid is thought to induce exposure of nuclear localization signal in the C-terminal portion of the capsid protein that allows binding to the nuclear pore complex via the importin (karyopherin-) alpha and beta. Capsids are imported in intact form through the nuclear pore into the nuclear basket, where it probably binds NUP153. Only capsids that contain the mature viral genome can release the viral DNA and capsid protein into the nucleoplasm. Immature capsids get stuck in the basket. Capsids encapsulate the pre-genomic RNA and the P protein. Pre-genomic RNA is reverse-transcribed into DNA while the capsid is still in the cytoplasm. The capsid can then either be directed to the nucleus, providing more genomes for transcription, or bud through the endoplasmic reticulum to provide new virions. This chain is Capsid protein, found in Hepatitis B virus genotype F2 (isolate Brazil/w4B) (HBV-F).